The sequence spans 1088 residues: DNA-directed RNA polymerase subunit beta (1088 aa).

The protein belongs to the RNA polymerase beta chain family. In terms of assembly, in plastids the minimal PEP RNA polymerase catalytic core is composed of four subunits: alpha, beta, beta', and beta''. When a (nuclear-encoded) sigma factor is associated with the core the holoenzyme is formed, which can initiate transcription.

The protein localises to the plastid. It is found in the chloroplast. The catalysed reaction is RNA(n) + a ribonucleoside 5'-triphosphate = RNA(n+1) + diphosphate. Functionally, DNA-dependent RNA polymerase catalyzes the transcription of DNA into RNA using the four ribonucleoside triphosphates as substrates. This chain is DNA-directed RNA polymerase subunit beta, found in Chlorokybus atmophyticus (Soil alga).